The sequence spans 82 residues: Large ribosomal subunit protein uL23 (82 aa).

It belongs to the universal ribosomal protein uL23 family. As to quaternary structure, part of the 50S ribosomal subunit. Contacts protein L29.

Its function is as follows. Binds to 23S rRNA. One of the proteins that surrounds the polypeptide exit tunnel on the outside of the ribosome. The sequence is that of Large ribosomal subunit protein uL23 from Methanosarcina acetivorans (strain ATCC 35395 / DSM 2834 / JCM 12185 / C2A).